The primary structure comprises 243 residues: Small ribosomal subunit protein uS5 (243 aa).

The segment covering 1–10 (MSDNETKETQ) has biased composition (basic and acidic residues). Residues 1 to 50 (MSDNETKETQVAEETQNTVATESNNEDRKGRRGQRGEGRRGERRNRREEN) form a disordered region. Residues 12–23 (AEETQNTVATES) show a composition bias toward polar residues. Basic and acidic residues predominate over residues 25–50 (NEDRKGRRGQRGEGRRGERRNRREEN). One can recognise an S5 DRBM domain in the interval 55–118 (LLDRVVTINR…LDAKKHMFSV (64 aa)).

It belongs to the universal ribosomal protein uS5 family. As to quaternary structure, part of the 30S ribosomal subunit. Contacts proteins S4 and S8.

Its function is as follows. With S4 and S12 plays an important role in translational accuracy. Functionally, located at the back of the 30S subunit body where it stabilizes the conformation of the head with respect to the body. This chain is Small ribosomal subunit protein uS5, found in Bifidobacterium longum (strain DJO10A).